We begin with the raw amino-acid sequence, 1083 residues long: Glutamate receptor-interacting protein 2 (1083 aa).

PDZ domains follow at residues 58–141, 156–244, and 258–342; these read IVEL…EYEL, TIEI…EYDV, and LVEI…LPAH. The segment covering 408–422 has biased composition (polar residues); the sequence is AGTPGFSSQNSNTLP. Residues 408-460 form a disordered region; that stretch reads AGTPGFSSQNSNTLPRTVHPMSPRTTMNRRRQKRKDHKSSLSLASSTVGPGGQ. The span at 434–444 shows a compositional bias: basic residues; sequence MNRRRQKRKDH. PDZ domains are found at residues 468–555, 569–652, and 667–749; these read EIIL…EIEF, HVKL…RKDE, and TVEL…KKQT. 3 disordered regions span residues 754–783, 853–872, and 936–965; these read PQRL…LSEI, NEQD…GLET, and GSHH…VHNA. Residues 774 to 783 are compositionally biased toward polar residues; the sequence is SQKTSKLSEI. Residues 945 to 963 show a composition bias toward basic and acidic residues; it reads PKKENKLSQDARSKKEEVH. One can recognise a PDZ 7 domain in the interval 974-1056; the sequence is KVTVQKDMDT…RLDLVISRGL (83 aa).

It belongs to the GRIP2 family. In terms of tissue distribution, enriched in the mitochondrial cloud of stage I oocytes, before becoming concentrated at the tip of the vegetal cortex in stage II oocytes. Expression becomes localized to the germ plasm of stage III-IV oocytes and early cleavage stages. At the tailbud stage, localizes to the migrating primordial germ cells (PGCs) until PGC migration is complete (stage 40), at which point expression disappears. In the adult, expressed in the brain, ovary, eye, muscle, spinal cord and very weakly in adipocytes.

Its subcellular location is the cytoplasm. Functionally, plays an important role in primordial germ cell (PGC) maintenance and efficiency of PGC migration. This Xenopus laevis (African clawed frog) protein is Glutamate receptor-interacting protein 2.